The following is a 234-amino-acid chain: 1-(5-phosphoribosyl)-5-[(5-phosphoribosylamino)methylideneamino] imidazole-4-carboxamide isomerase (234 aa).

Asp9 functions as the Proton acceptor in the catalytic mechanism. Asp131 functions as the Proton donor in the catalytic mechanism.

This sequence belongs to the HisA/HisF family.

It localises to the cytoplasm. The enzyme catalyses 1-(5-phospho-beta-D-ribosyl)-5-[(5-phospho-beta-D-ribosylamino)methylideneamino]imidazole-4-carboxamide = 5-[(5-phospho-1-deoxy-D-ribulos-1-ylimino)methylamino]-1-(5-phospho-beta-D-ribosyl)imidazole-4-carboxamide. It participates in amino-acid biosynthesis; L-histidine biosynthesis; L-histidine from 5-phospho-alpha-D-ribose 1-diphosphate: step 4/9. The protein is 1-(5-phosphoribosyl)-5-[(5-phosphoribosylamino)methylideneamino] imidazole-4-carboxamide isomerase of Staphylococcus aureus (strain bovine RF122 / ET3-1).